Reading from the N-terminus, the 192-residue chain is Shikimate kinase (192 aa).

Residue 26–31 participates in ATP binding; that stretch reads ASGKSS. A Mg(2+)-binding site is contributed by S30. The substrate site is built by D48, R72, and G94. Residue R132 participates in ATP binding. R151 serves as a coordination point for substrate.

The protein belongs to the shikimate kinase family. As to quaternary structure, monomer. It depends on Mg(2+) as a cofactor.

Its subcellular location is the cytoplasm. The enzyme catalyses shikimate + ATP = 3-phosphoshikimate + ADP + H(+). It participates in metabolic intermediate biosynthesis; chorismate biosynthesis; chorismate from D-erythrose 4-phosphate and phosphoenolpyruvate: step 5/7. In terms of biological role, catalyzes the specific phosphorylation of the 3-hydroxyl group of shikimic acid using ATP as a cosubstrate. The chain is Shikimate kinase from Prochlorococcus marinus (strain MIT 9313).